The chain runs to 314 residues: Methionyl-tRNA formyltransferase (314 aa).

(6S)-5,6,7,8-tetrahydrofolate is bound at residue 113–116 (SLLP).

It belongs to the Fmt family.

It carries out the reaction L-methionyl-tRNA(fMet) + (6R)-10-formyltetrahydrofolate = N-formyl-L-methionyl-tRNA(fMet) + (6S)-5,6,7,8-tetrahydrofolate + H(+). In terms of biological role, attaches a formyl group to the free amino group of methionyl-tRNA(fMet). The formyl group appears to play a dual role in the initiator identity of N-formylmethionyl-tRNA by promoting its recognition by IF2 and preventing the misappropriation of this tRNA by the elongation apparatus. The sequence is that of Methionyl-tRNA formyltransferase from Pseudomonas aeruginosa (strain ATCC 15692 / DSM 22644 / CIP 104116 / JCM 14847 / LMG 12228 / 1C / PRS 101 / PAO1).